The chain runs to 356 residues: NADH dehydrogenase (ubiquinone) complex I, assembly factor 6 homolog (356 aa).

The N-terminal 41 residues, 1 to 41 (MIRNSGRILFNSLKNSNVKLINRNVIINSNIRLFSTSTNNT), are a transit peptide targeting the mitochondrion.

This sequence belongs to the NDUFAF6 family.

Its subcellular location is the mitochondrion inner membrane. Functionally, involved in the assembly of mitochondrial NADH:ubiquinone oxidoreductase complex (complex I) at early stages. The chain is NADH dehydrogenase (ubiquinone) complex I, assembly factor 6 homolog from Dictyostelium discoideum (Social amoeba).